The primary structure comprises 352 residues: MGHCTSKDQKEGKRLNRRIDEQIKKDQSMSLRIIKLLLLGAGESGKSTILKQMRILHKDGFSQQDLEMIRPVVYSNCIHSMLSILRAMFHLQIEYGEPDRVRDSQLVFATVHANKEELTEELAAAMQRLWHDPGVRECYRRSNEYQIDDSAKYFLDNLPRLSSPNYVPSEQDLLRTRIKTTGITEVLFELKGLTFRVIDVGGQRSERKKWIHCFDNVNAIIFISSLSEYDQTLREDNCTNRMQESLKLFDSICNSPWFADIHFILFLNKKDLFAEKIVRSPLTVCFPEYKGQQNQTECINYIQWKFEQLNRSSQREIYCHHTCATDTNNVQFVLDACLDMIIAKNLKSMGLC.

Gly2 carries N-myristoyl glycine lipidation. Cys4 carries S-palmitoyl cysteine lipidation. The G-alpha domain occupies 32 to 352; the sequence is RIIKLLLLGA…AKNLKSMGLC (321 aa). Residues 35–48 form a G1 motif region; that stretch reads KLLLLGAGESGKST. GTP is bound by residues 40–47, 174–180, 199–203, 268–271, and Ala324; these read GAGESGKS, LRTRIKT, DVGGQ, and NKKD. Ser47 and Thr180 together coordinate Mg(2+). The interval 172–180 is G2 motif; that stretch reads DLLRTRIKT. Residues 195–204 form a G3 motif region; the sequence is FRVIDVGGQR. Positions 264–271 are G4 motif; it reads ILFLNKKD. The segment at 322-327 is G5 motif; sequence TCATDT.

The protein belongs to the G-alpha family. G(i/o/t/z) subfamily. As to quaternary structure, g proteins are composed of 3 units; alpha, beta and gamma. The alpha chain contains the guanine nucleotide binding site.

Guanine nucleotide-binding proteins (G proteins) are involved as modulators or transducers in various transmembrane signaling systems. This Caenorhabditis elegans protein is Guanine nucleotide-binding protein alpha-7 subunit (gpa-7).